The following is a 239-amino-acid chain: Adenylate kinase 2 (239 aa).

Position 29 to 34 (29 to 34) interacts with ATP; that stretch reads GSGKGT. An NMP region spans residues 49–78; the sequence is STGDILRAIIASGSELGQKVQKITESGGLV. Residues threonine 50, arginine 55, 76 to 78, 104 to 107, and glutamine 111 each bind AMP; these read GLV and GFPR. The LID stretch occupies residues 145–182; sequence GRLFHLASGRSYHELFNPPKVPMVDDITGDRLVHRSDD. Residues arginine 146 and 155–156 each bind ATP; that span reads SY. Residues arginine 179 and arginine 190 each contribute to the AMP site.

It belongs to the adenylate kinase family. AK2 subfamily. Monomer. Mg(2+) serves as cofactor.

Its subcellular location is the cytoplasm. It localises to the cytosol. The enzyme catalyses AMP + ATP = 2 ADP. Its pathway is purine metabolism; purine nucleotide biosynthesis. Its function is as follows. Catalyzes the reversible transfer of the terminal phosphate group between ATP and AMP. Plays an important role in cellular energy homeostasis and in adenine nucleotide metabolism. The chain is Adenylate kinase 2 from Schistosoma mansoni (Blood fluke).